Consider the following 1284-residue polypeptide: Putative late blight resistance protein homolog R1B-16 (1284 aa).

Residues 533 to 555 are a coiled coil; it reads PRMNEEIVGFKDVIENLRNQLLN. Residues 534–821 enclose the NB-ARC domain; it reads RMNEEIVGFK…SESFIKSSEG (288 aa). 567-574 lines the ATP pocket; the sequence is GMPGLGKT. LRR repeat units follow at residues 942 to 966, 985 to 1010, 1013 to 1036, 1085 to 1107, 1108 to 1135, 1159 to 1181, 1182 to 1206, and 1219 to 1243; these read FKFL…LFYL, LWNL…VWDM, LRHL…SAKL, PIRL…FCIS, APNL…HLKN, FPQL…ADDA, FPNL…FMDI, and ESVV…NFKL. Residues 1217–1284 enclose the HMA domain; the sequence is CNESVVKSAM…VEKQRKRGML (68 aa).

This sequence belongs to the disease resistance NB-LRR family.

The protein resides in the cytoplasm. It localises to the membrane. In terms of biological role, confers resistance to late blight (Phytophthora infestans) races carrying the avirulence gene Avr1. Resistance proteins guard the plant against pathogens that contain an appropriate avirulence protein via an indirect interaction with this avirulence protein. That triggers a defense system including the hypersensitive response, which restricts the pathogen growth. This chain is Putative late blight resistance protein homolog R1B-16 (R1B-16), found in Solanum demissum (Wild potato).